Consider the following 461-residue polypeptide: Bifunctional protein GlmU (461 aa).

The segment at Met-1–Arg-232 is pyrophosphorylase. Residues Leu-8–Gly-11, Lys-22, Gln-73, and Gly-78–Thr-79 each bind UDP-N-acetyl-alpha-D-glucosamine. A Mg(2+)-binding site is contributed by Asp-102. Positions 142, 157, and 230 each coordinate UDP-N-acetyl-alpha-D-glucosamine. Asn-230 is a Mg(2+) binding site. Positions Gln-233–Lys-253 are linker. An N-acetyltransferase region spans residues Gly-254 to Asp-461. Arg-336 and Lys-354 together coordinate UDP-N-acetyl-alpha-D-glucosamine. The active-site Proton acceptor is His-366. 2 residues coordinate UDP-N-acetyl-alpha-D-glucosamine: Tyr-369 and Asn-380. Acetyl-CoA-binding positions include Ala-383, Asn-389–Tyr-390, Ser-408, and Ala-426.

It in the N-terminal section; belongs to the N-acetylglucosamine-1-phosphate uridyltransferase family. The protein in the C-terminal section; belongs to the transferase hexapeptide repeat family. In terms of assembly, homotrimer. Mg(2+) is required as a cofactor.

It localises to the cytoplasm. It catalyses the reaction alpha-D-glucosamine 1-phosphate + acetyl-CoA = N-acetyl-alpha-D-glucosamine 1-phosphate + CoA + H(+). The enzyme catalyses N-acetyl-alpha-D-glucosamine 1-phosphate + UTP + H(+) = UDP-N-acetyl-alpha-D-glucosamine + diphosphate. Its pathway is nucleotide-sugar biosynthesis; UDP-N-acetyl-alpha-D-glucosamine biosynthesis; N-acetyl-alpha-D-glucosamine 1-phosphate from alpha-D-glucosamine 6-phosphate (route II): step 2/2. It functions in the pathway nucleotide-sugar biosynthesis; UDP-N-acetyl-alpha-D-glucosamine biosynthesis; UDP-N-acetyl-alpha-D-glucosamine from N-acetyl-alpha-D-glucosamine 1-phosphate: step 1/1. The protein operates within bacterial outer membrane biogenesis; LPS lipid A biosynthesis. Catalyzes the last two sequential reactions in the de novo biosynthetic pathway for UDP-N-acetylglucosamine (UDP-GlcNAc). The C-terminal domain catalyzes the transfer of acetyl group from acetyl coenzyme A to glucosamine-1-phosphate (GlcN-1-P) to produce N-acetylglucosamine-1-phosphate (GlcNAc-1-P), which is converted into UDP-GlcNAc by the transfer of uridine 5-monophosphate (from uridine 5-triphosphate), a reaction catalyzed by the N-terminal domain. In Legionella pneumophila (strain Lens), this protein is Bifunctional protein GlmU.